A 305-amino-acid polypeptide reads, in one-letter code: RNA-binding protein with serine-rich domain 1 (305 aa).

Residues 1-10 (MDLSGVKKKS) show a composition bias toward basic residues. The segment at 1 to 161 (MDLSGVKKKS…KRRSPSPKPT (161 aa)) is necessary for interaction with SRP54, nuclear localization and exon-skipping. The segment at 1-170 (MDLSGVKKKS…TKVHIGRLTR (170 aa)) is disordered. Residues 1-220 (MDLSGVKKKS…ENPDEAEKAL (220 aa)) are necessary for interaction with the cleaved p110 isoform of CDC2L1. Residues Lys7 and Lys15 each participate in a glycyl lysine isopeptide (Lys-Gly) (interchain with G-Cter in SUMO2) cross-link. Residues 33-59 (DRSDEKSKDRSKDKGATKESSEKDRGR) are compositionally biased toward basic and acidic residues. Ser53 is modified (phosphoserine; by CK2). Positions 68 to 126 (ASSGSSSTRSRSSSTSSSGSSTSTGSSSGSSSSSASSRSGSSSTSRSSSSSSSSGSPSP) are enriched in low complexity. Positions 69–121 (SSGSSSTRSRSSSTSSSGSSTSTGSSSGSSSSSASSRSGSSSTSRSSSSSSSS) are necessary for interactions with UPF2 and UPF3B and UPF2-dependent NMD. Composition is skewed to basic residues over residues 127–143 (SRRR…KSKP) and 151–167 (RKRR…HIGR). Phosphoserine occurs at positions 155 and 157. Positions 156–242 (PSPKPTKVHI…ITATAVLAPW (87 aa)) are necessary for interaction with PNN and exon-skipping. The interaction with SAP18 and ACIN1 stretch occupies residues 159–244 (KPTKVHIGRL…ATAVLAPWPR (86 aa)). Thr161 is subject to Phosphothreonine. The region spanning 161-240 (TKVHIGRLTR…QEITATAVLA (80 aa)) is the RRM domain. Residue Lys218 is modified to N6-acetyllysine. A necessary for interaction with TRA2B, nuclear localization and exon-skipping region spans residues 238–305 (VLAPWPRPPP…RSRSSSNSSR (68 aa)). The tract at residues 240–305 (APWPRPPPRR…RSRSSSNSSR (66 aa)) is disordered. Residues 242 to 262 (WPRPPPRRFSPPRRMLPPPPM) show a composition bias toward pro residues. Residues 266–298 (SPPRMRRRSRSPRRRSPVRRRSRSPGRRRHRSR) are compositionally biased toward basic residues.

Belongs to the splicing factor SR family. Found in mRNA splicing-dependent exon junction complexes (EJC). Found in a post-splicing complex with NXF1, RBM8A, UPF1, UPF2, UPF3A, UPF3B and RNPS1. Component of the heterotrimeric ASAP (apoptosis- and splicing-associated protein) and PSAP complexes consisting of RNPS1, SAP18 and either ACIN1 or PNN, respectively; the ASAP and PSAP complexes probably are formed mutually exclusive. Component of the active spliceosome. Associates with polysomes. Interacts with the cleaved p110 isoform of CDC2L1, CSNK2A1, PNN, SART3, SRP54, SRRM1 and TRA2B/SFRS10. Phosphorylated on one or more of the four Ser/Thr residues (Ser-43, Thr-49, Ser-52 or Ser-53). Ser-53 phosphorylation site is important for splicing and translation stimulation activity in vitro. Ubiquitous.

The protein resides in the nucleus. It localises to the nucleus speckle. The protein localises to the cytoplasm. Functionally, part of pre- and post-splicing multiprotein mRNP complexes. Auxiliary component of the splicing-dependent multiprotein exon junction complex (EJC) deposited at splice junction on mRNAs. The EJC is a dynamic structure consisting of core proteins and several peripheral nuclear and cytoplasmic associated factors that join the complex only transiently either during EJC assembly or during subsequent mRNA metabolism. Component of the ASAP and PSAP complexes which bind RNA in a sequence-independent manner and are proposed to be recruited to the EJC prior to or during the splicing process and to regulate specific excision of introns in specific transcription subsets. The ASAP complex can inhibit RNA processing during in vitro splicing reactions. The ASAP complex promotes apoptosis and is disassembled after induction of apoptosis. Enhances the formation of the ATP-dependent A complex of the spliceosome. Involved in both constitutive splicing and, in association with SRP54 and TRA2B/SFRS10, in distinctive modulation of alternative splicing in a substrate-dependent manner. Involved in the splicing modulation of BCL2L1/Bcl-X (and probably other apoptotic genes); specifically inhibits formation of proapoptotic isoforms such as Bcl-X(S); the activity is different from the established EJC assembly and function. Participates in mRNA 3'-end cleavage. Involved in UPF2-dependent nonsense-mediated decay (NMD) of mRNAs containing premature stop codons. Also mediates increase of mRNA abundance and translational efficiency. Binds spliced mRNA 20-25 nt upstream of exon-exon junctions. In Homo sapiens (Human), this protein is RNA-binding protein with serine-rich domain 1 (RNPS1).